The following is a 200-amino-acid chain: Transgelin (200 aa).

Position 2 is an N-acetylalanine (A2). The Calponin-homology (CH) domain occupies D24–A137. A Calponin-like repeat occupies I175–I199.

Belongs to the calponin family. Monomer. As to expression, gizzard, uterus, intestine, esophagus, aorta, and trace amounts in brain, liver and heart.

The protein resides in the cytoplasm. Actin cross-linking/gelling protein. The polypeptide is Transgelin (TAGLN) (Gallus gallus (Chicken)).